The primary structure comprises 287 residues: MRSLHILLVFTASLLASLTESAKADSLARTVSVVDNVKVKSRFLRAQTDEKNEERATITLGDRVVSDKAATKDLLQQLLALGTPLEKVQKQFLNIPQMKTFAELSKHPNWKALDKYERMQWQKLKEGETLTFMRLGDRLYSKEKAQEQLLRWVAQKKPVESVYDDLQVAGFAHNTVAARQNWRAYIMYDKWFTAASQMQRNPQQYAKFGTGYHSEQKTTELFEKWAMEGTHIKSVITTLKLNGKSASEMANNENFPALLKYVKLYLDFKPVRDLNAKSRLQARRPIS.

The first 24 residues, 1–24, serve as a signal peptide directing secretion; that stretch reads MRSLHILLVFTASLLASLTESAKA. A RxLR-dEER motif is present at residues 42–55; the sequence is RFLRAQTDEKNEER. Positions 115–138 are W1 motif; that stretch reads KYERMQWQKLKEGETLTFMRLGDR. Residues 148–171 are W2 motif; it reads QLLRWVAQKKPVESVYDDLQVAGF. Positions 221–244 are W3 motif; that stretch reads LFEKWAMEGTHIKSVITTLKLNGK. A y motif region spans residues 246 to 267; the sequence is ASEMANNENFPALLKYVKLYLD.

Belongs to the RxLR effector family.

It localises to the secreted. The protein localises to the host cytoplasm. The protein resides in the host nucleus. Its subcellular location is the host nucleolus. It is found in the host cytoskeleton. Its function is as follows. Secreted effector that acts as an elicitor of hypersensitive response (HR) specifically on plants carrying defense protein R4, through its interaction with this protein. The sequence is that of RxLR effector protein Avr4 from Phytophthora infestans (strain T30-4) (Potato late blight agent).